The sequence spans 20 residues: Non-specific lipid-transfer protein-like protein (20 aa).

It belongs to the plant LTP family.

In Jatropha curcas (Barbados nut), this protein is Non-specific lipid-transfer protein-like protein.